A 91-amino-acid chain; its full sequence is Acylphosphatase (91 aa).

The Acylphosphatase-like domain maps to 3-91 (CLKAVVKGKV…GNYGDFHIKY (89 aa)). Catalysis depends on residues Arg18 and Asn36.

It belongs to the acylphosphatase family.

It catalyses the reaction an acyl phosphate + H2O = a carboxylate + phosphate + H(+). In Dehalococcoides mccartyi (strain ATCC BAA-2266 / KCTC 15142 / 195) (Dehalococcoides ethenogenes (strain 195)), this protein is Acylphosphatase (acyP).